A 286-amino-acid polypeptide reads, in one-letter code: L-ribulose 3-epimerase (286 aa).

4 residues coordinate D-allulose: His12, Ser69, Glu152, and Glu158. Residues His12, Ser69, Glu152, and Glu158 each coordinate D-fructose. Glu152 serves as the catalytic Proton donor/acceptor. Residue Glu152 participates in Mn(2+) binding. Asp185 serves as a coordination point for Mn(2+). Residues His188, His211, Arg217, and Glu246 each contribute to the D-allulose site. D-fructose-binding residues include His188, His211, Arg217, and Glu246. His211 serves as a coordination point for Mn(2+). The active-site Proton donor/acceptor is Glu246. A Mn(2+)-binding site is contributed by Glu246.

Belongs to the hyi family. Homodimer. It depends on Mn(2+) as a cofactor.

It carries out the reaction L-ribulose = L-xylulose. It catalyses the reaction D-ribulose = D-xylulose. The catalysed reaction is D-allulose = keto-D-fructose. The enzyme catalyses keto-L-tagatose = keto-L-sorbose. It carries out the reaction keto-D-tagatose = keto-D-sorbose. In terms of biological role, catalyzes the epimerization of various ketoses at the C(3) position. Exhibits the highest enzymatic activity toward L-ribulose, followed by D-ribulose, D-allulose and D-fructose. Shows lower activity with L-xylulose, L-tagatose, D-xylulose, D-tagatose, L-sorbose, D-sorbose, and weak activity with L-allulose and L-fructose. The protein is L-ribulose 3-epimerase of Methylomonas sp. (strain DH-1).